The following is a 294-amino-acid chain: NADH-cytochrome b5 reductase 2 (294 aa).

Residues 11–27 form a helical membrane-spanning segment; sequence VLLPVVAAATSIGLVYH. Residues 45–149 enclose the FAD-binding FR-type domain; that stretch reads DEWIDLKLKK…KGPIVKWKWE (105 aa). 152-187 contributes to the FAD binding site; it reads QFQSIALIGGGTGITPLYQLLHEITKNPEDKTKVKL.

Belongs to the flavoprotein pyridine nucleotide cytochrome reductase family. It depends on FAD as a cofactor.

It localises to the mitochondrion outer membrane. The enzyme catalyses 2 Fe(III)-[cytochrome b5] + NADH = 2 Fe(II)-[cytochrome b5] + NAD(+) + H(+). Functionally, may mediate the reduction of outer membrane cytochrome b5. The polypeptide is NADH-cytochrome b5 reductase 2 (MCR1) (Meyerozyma guilliermondii (strain ATCC 6260 / CBS 566 / DSM 6381 / JCM 1539 / NBRC 10279 / NRRL Y-324) (Yeast)).